The chain runs to 148 residues: Large ribosomal subunit protein bL9 (148 aa).

The protein belongs to the bacterial ribosomal protein bL9 family.

Functionally, binds to the 23S rRNA. This chain is Large ribosomal subunit protein bL9, found in Listeria welshimeri serovar 6b (strain ATCC 35897 / DSM 20650 / CCUG 15529 / CIP 8149 / NCTC 11857 / SLCC 5334 / V8).